The sequence spans 315 residues: Olfactory receptor 11A1 (315 aa).

The Extracellular segment spans residues 1–27; the sequence is MEIVSTGNETITEFVLLGFYDIPELHF. N-linked (GlcNAc...) asparagine glycosylation is present at N8. The chain crosses the membrane as a helical span at residues 28-48; the sequence is LFFIVFTAVYVFIIIGNMLII. Residues 49–56 are Cytoplasmic-facing; that stretch reads VAVVSSQR. Residues 57-77 form a helical membrane-spanning segment; it reads LHKPMYIFLANLSFLDILYTS. At 78–100 the chain is on the extracellular side; that stretch reads AVMPKMLEGFLQEATISVAGCLL. A disulfide bridge links C98 with C190. Residues 101–121 traverse the membrane as a helical segment; the sequence is QFFIFGSLATAECLLLAVMAY. Over 122-140 the chain is Cytoplasmic; sequence DRYLAICYPLHYPLLMGPR. The chain crosses the membrane as a helical span at residues 141–161; the sequence is RYMGLVVTTWLSGFVVDGLVV. At 162–198 the chain is on the extracellular side; that stretch reads ALVAQLRFCGPNHIDQFYCDFMLFVGLACSDPRVAQV. The helical transmembrane segment at 199-218 threads the bilayer; it reads TTLILSVFCLTIPFGLILTS. Residues 219-238 are Cytoplasmic-facing; that stretch reads YARIVVAVLRVPAGASRRRA. A helical transmembrane segment spans residues 239–259; it reads FSTCSSHLAVVTTFYGTLMIF. Residues 260-272 are Extracellular-facing; the sequence is YVAPSAVHSQLLS. The helical transmembrane segment at 273-293 threads the bilayer; it reads KVFSLLYTVVTPLFNPVIYTM. Topologically, residues 294–315 are cytoplasmic; sequence RNKEVHQALRKILCIKQTETLD.

The protein belongs to the G-protein coupled receptor 1 family.

Its subcellular location is the cell membrane. Odorant receptor. The chain is Olfactory receptor 11A1 (OR11A1) from Homo sapiens (Human).